Here is a 301-residue protein sequence, read N- to C-terminus: Phosphatidylserine decarboxylase proenzyme (301 aa).

Residues Asp117, His173, and Ser260 each act as charge relay system; for autoendoproteolytic cleavage activity in the active site. Ser260 functions as the Schiff-base intermediate with substrate; via pyruvic acid; for decarboxylase activity in the catalytic mechanism. Pyruvic acid (Ser); by autocatalysis is present on Ser260.

Belongs to the phosphatidylserine decarboxylase family. PSD-B subfamily. Prokaryotic type II sub-subfamily. In terms of assembly, heterodimer of a large membrane-associated beta subunit and a small pyruvoyl-containing alpha subunit. Requires pyruvate as cofactor. Post-translationally, is synthesized initially as an inactive proenzyme. Formation of the active enzyme involves a self-maturation process in which the active site pyruvoyl group is generated from an internal serine residue via an autocatalytic post-translational modification. Two non-identical subunits are generated from the proenzyme in this reaction, and the pyruvate is formed at the N-terminus of the alpha chain, which is derived from the carboxyl end of the proenzyme. The autoendoproteolytic cleavage occurs by a canonical serine protease mechanism, in which the side chain hydroxyl group of the serine supplies its oxygen atom to form the C-terminus of the beta chain, while the remainder of the serine residue undergoes an oxidative deamination to produce ammonia and the pyruvoyl prosthetic group on the alpha chain. During this reaction, the Ser that is part of the protease active site of the proenzyme becomes the pyruvoyl prosthetic group, which constitutes an essential element of the active site of the mature decarboxylase.

The protein localises to the cell membrane. It carries out the reaction a 1,2-diacyl-sn-glycero-3-phospho-L-serine + H(+) = a 1,2-diacyl-sn-glycero-3-phosphoethanolamine + CO2. Its pathway is phospholipid metabolism; phosphatidylethanolamine biosynthesis; phosphatidylethanolamine from CDP-diacylglycerol: step 2/2. In terms of biological role, catalyzes the formation of phosphatidylethanolamine (PtdEtn) from phosphatidylserine (PtdSer). This is Phosphatidylserine decarboxylase proenzyme from Chlamydia trachomatis serovar L2 (strain ATCC VR-902B / DSM 19102 / 434/Bu).